The chain runs to 85 residues: Large ribosomal subunit protein bL27 (85 aa).

The segment at 1 to 22 (MAHKKAGGSTRNGRDSESKRLG) is disordered.

It belongs to the bacterial ribosomal protein bL27 family.

The polypeptide is Large ribosomal subunit protein bL27 (Marinomonas sp. (strain MWYL1)).